We begin with the raw amino-acid sequence, 126 residues long: Holo-[acyl-carrier-protein] synthase (126 aa).

D9 and E58 together coordinate Mg(2+).

It belongs to the P-Pant transferase superfamily. AcpS family. The cofactor is Mg(2+).

It is found in the cytoplasm. The catalysed reaction is apo-[ACP] + CoA = holo-[ACP] + adenosine 3',5'-bisphosphate + H(+). Its function is as follows. Transfers the 4'-phosphopantetheine moiety from coenzyme A to a Ser of acyl-carrier-protein. The protein is Holo-[acyl-carrier-protein] synthase of Enterobacter sp. (strain 638).